Reading from the N-terminus, the 213-residue chain is Uridine kinase (213 aa).

An ATP-binding site is contributed by 15–22 (GASASGKS).

Belongs to the uridine kinase family.

It localises to the cytoplasm. The enzyme catalyses uridine + ATP = UMP + ADP + H(+). It carries out the reaction cytidine + ATP = CMP + ADP + H(+). It functions in the pathway pyrimidine metabolism; CTP biosynthesis via salvage pathway; CTP from cytidine: step 1/3. Its pathway is pyrimidine metabolism; UMP biosynthesis via salvage pathway; UMP from uridine: step 1/1. This chain is Uridine kinase, found in Serratia proteamaculans (strain 568).